The chain runs to 250 residues: tRNA (guanine-N(1)-)-methyltransferase (250 aa).

S-adenosyl-L-methionine contacts are provided by residues glycine 112 and 132–137; that span reads IGDFVL.

This sequence belongs to the RNA methyltransferase TrmD family. In terms of assembly, homodimer.

Its subcellular location is the cytoplasm. The catalysed reaction is guanosine(37) in tRNA + S-adenosyl-L-methionine = N(1)-methylguanosine(37) in tRNA + S-adenosyl-L-homocysteine + H(+). Functionally, specifically methylates guanosine-37 in various tRNAs. The sequence is that of tRNA (guanine-N(1)-)-methyltransferase from Marinomonas sp. (strain MWYL1).